Reading from the N-terminus, the 134-residue chain is Small ribosomal subunit protein uS8c (134 aa).

Belongs to the universal ribosomal protein uS8 family. In terms of assembly, part of the 30S ribosomal subunit.

It localises to the plastid. It is found in the chloroplast. In terms of biological role, one of the primary rRNA binding proteins, it binds directly to 16S rRNA central domain where it helps coordinate assembly of the platform of the 30S subunit. In Arabidopsis thaliana (Mouse-ear cress), this protein is Small ribosomal subunit protein uS8c (rps8).